Consider the following 476-residue polypeptide: Glutamate--tRNA ligase (476 aa).

The 'HIGH' region signature appears at 9 to 19 (PSPTGTLHIGT). Positions 248–252 (KLSKR) match the 'KMSKS' region motif. Lys251 lines the ATP pocket.

The protein belongs to the class-I aminoacyl-tRNA synthetase family. Glutamate--tRNA ligase type 1 subfamily. In terms of assembly, monomer.

The protein resides in the cytoplasm. The catalysed reaction is tRNA(Glu) + L-glutamate + ATP = L-glutamyl-tRNA(Glu) + AMP + diphosphate. Catalyzes the attachment of glutamate to tRNA(Glu) in a two-step reaction: glutamate is first activated by ATP to form Glu-AMP and then transferred to the acceptor end of tRNA(Glu). This chain is Glutamate--tRNA ligase, found in Prochlorococcus marinus (strain MIT 9313).